Consider the following 83-residue polypeptide: MSKVCDITGKRPRVGNKVSHANNKTKRRFYPNLQFKKFYVPETNSWIVLRVSTSVIRTINKKGILEVIKEAQRKGTISQLIVG.

It belongs to the bacterial ribosomal protein bL28 family.

In Amoebophilus asiaticus (strain 5a2), this protein is Large ribosomal subunit protein bL28.